The following is a 342-amino-acid chain: Holliday junction branch migration complex subunit RuvB (342 aa).

The large ATPase domain (RuvB-L) stretch occupies residues 1–181 (MENRMVTPFD…FGMLCAMEFY (181 aa)). Residues Leu20, Arg21, Gly62, Lys65, Thr66, Thr67, 128-130 (EDY), Arg171, Tyr181, and Arg218 each bind ATP. Mg(2+) is bound at residue Thr66. The segment at 182 to 252 (TDEELMEIVV…GAKAALDLLE (71 aa)) is small ATPAse domain (RuvB-S). A head domain (RuvB-H) region spans residues 255-342 (KEGLDKIDNK…KDNQVSIFNK (88 aa)). Arg310 and Arg315 together coordinate DNA.

The protein belongs to the RuvB family. Homohexamer. Forms an RuvA(8)-RuvB(12)-Holliday junction (HJ) complex. HJ DNA is sandwiched between 2 RuvA tetramers; dsDNA enters through RuvA and exits via RuvB. An RuvB hexamer assembles on each DNA strand where it exits the tetramer. Each RuvB hexamer is contacted by two RuvA subunits (via domain III) on 2 adjacent RuvB subunits; this complex drives branch migration. In the full resolvosome a probable DNA-RuvA(4)-RuvB(12)-RuvC(2) complex forms which resolves the HJ.

It localises to the cytoplasm. The catalysed reaction is ATP + H2O = ADP + phosphate + H(+). In terms of biological role, the RuvA-RuvB-RuvC complex processes Holliday junction (HJ) DNA during genetic recombination and DNA repair, while the RuvA-RuvB complex plays an important role in the rescue of blocked DNA replication forks via replication fork reversal (RFR). RuvA specifically binds to HJ cruciform DNA, conferring on it an open structure. The RuvB hexamer acts as an ATP-dependent pump, pulling dsDNA into and through the RuvAB complex. RuvB forms 2 homohexamers on either side of HJ DNA bound by 1 or 2 RuvA tetramers; 4 subunits per hexamer contact DNA at a time. Coordinated motions by a converter formed by DNA-disengaged RuvB subunits stimulates ATP hydrolysis and nucleotide exchange. Immobilization of the converter enables RuvB to convert the ATP-contained energy into a lever motion, pulling 2 nucleotides of DNA out of the RuvA tetramer per ATP hydrolyzed, thus driving DNA branch migration. The RuvB motors rotate together with the DNA substrate, which together with the progressing nucleotide cycle form the mechanistic basis for DNA recombination by continuous HJ branch migration. Branch migration allows RuvC to scan DNA until it finds its consensus sequence, where it cleaves and resolves cruciform DNA. The chain is Holliday junction branch migration complex subunit RuvB from Clostridium botulinum (strain 657 / Type Ba4).